A 64-amino-acid polypeptide reads, in one-letter code: Large ribosomal subunit protein bL28C (64 aa).

This sequence belongs to the bacterial ribosomal protein bL28 family.

This Mycobacterium tuberculosis (strain ATCC 25618 / H37Rv) protein is Large ribosomal subunit protein bL28C.